The following is a 484-amino-acid chain: Ferrochelatase-2, chloroplastic (484 aa).

Belongs to the ferrochelatase family.

The protein resides in the plastid. Its subcellular location is the chloroplast. The catalysed reaction is heme b + 2 H(+) = protoporphyrin IX + Fe(2+). The protein operates within porphyrin-containing compound metabolism; protoheme biosynthesis; protoheme from protoporphyrin-IX: step 1/1. Functionally, catalyzes the ferrous insertion into protoporphyrin IX. This Hordeum vulgare (Barley) protein is Ferrochelatase-2, chloroplastic (HEMH).